The chain runs to 115 residues: Large ribosomal subunit protein bL21 (115 aa).

It belongs to the bacterial ribosomal protein bL21 family. As to quaternary structure, part of the 50S ribosomal subunit. Contacts protein L20.

Its function is as follows. This protein binds to 23S rRNA in the presence of protein L20. The sequence is that of Large ribosomal subunit protein bL21 from Coxiella burnetii (strain RSA 331 / Henzerling II).